A 376-amino-acid chain; its full sequence is Actin-related protein T1 (376 aa).

The protein belongs to the actin family.

The protein resides in the cytoplasm. It is found in the cytoskeleton. Its subcellular location is the nucleus. The protein localises to the cytoplasmic vesicle. It localises to the secretory vesicle. The protein resides in the acrosome. Functionally, negatively regulates the Hedgehog (SHH) signaling. Binds to the promoter of the SHH signaling mediator, GLI1, and inhibits its expression. In Rattus norvegicus (Rat), this protein is Actin-related protein T1 (Actrt1).